A 261-amino-acid chain; its full sequence is Small ribosomal subunit protein uS2 (261 aa).

S2 is modified (N-acetylserine). A disordered region spans residues 211 to 261 (EQNAAEDSKAEDAEEAPVADAEPDWSGETEDVDWAESGATPAAEEAAASNW). Positions 222-244 (DAEEAPVADAEPDWSGETEDVDW) are enriched in acidic residues. Residues 245 to 261 (AESGATPAAEEAAASNW) show a composition bias toward low complexity.

It belongs to the universal ribosomal protein uS2 family. Component of the small ribosomal subunit. Mature ribosomes consist of a small (40S) and a large (60S) subunit. The 40S subunit contains about 33 different proteins and 1 molecule of RNA (18S). The 60S subunit contains about 49 different proteins and 3 molecules of RNA (25S, 5.8S and 5S). Interacts with RPS21.

The protein resides in the cytoplasm. In terms of biological role, required for the assembly and/or stability of the 40S ribosomal subunit. Required for the processing of the 20S rRNA-precursor to mature 18S rRNA in a late step of the maturation of 40S ribosomal subunits. This chain is Small ribosomal subunit protein uS2, found in Meyerozyma guilliermondii (strain ATCC 6260 / CBS 566 / DSM 6381 / JCM 1539 / NBRC 10279 / NRRL Y-324) (Yeast).